A 156-amino-acid chain; its full sequence is MKTNDKTKKIVLTAGTFDLLHPGHHNTLKYAKSLGDELIVVIARDETVKKIKGRKPVIPENQRREMIEAIKPVDKAILGSLTDKLEPILKIKPDIIVLGPDQITFDAENLKNELKKLGLDVEIVKTKEYTNCDFHSSYDIIKEIVKRWCNKKIIKK.

ATP is bound by residues 16-17 (TF), 21-24 (HPGH), aspartate 101, and tyrosine 129.

This sequence belongs to the archaeal FAD synthase family. In terms of assembly, homodimer. It depends on a divalent metal cation as a cofactor.

The catalysed reaction is FMN + ATP + H(+) = FAD + diphosphate. Its pathway is cofactor biosynthesis; FAD biosynthesis; FAD from FMN: step 1/1. In terms of biological role, catalyzes the transfer of the AMP portion of ATP to flavin mononucleotide (FMN) to produce flavin adenine dinucleotide (FAD) coenzyme. This Methanococcus aeolicus (strain ATCC BAA-1280 / DSM 17508 / OCM 812 / Nankai-3) protein is FAD synthase.